Reading from the N-terminus, the 487-residue chain is Protein nucleotidyltransferase YdiU (487 aa).

ATP contacts are provided by G90, G92, R93, K113, D125, G126, R176, and R183. Residue D252 is the Proton acceptor of the active site. Mg(2+) contacts are provided by N253 and D262. D262 serves as a coordination point for ATP.

Belongs to the SELO family. Mg(2+) is required as a cofactor. It depends on Mn(2+) as a cofactor.

The enzyme catalyses L-seryl-[protein] + ATP = 3-O-(5'-adenylyl)-L-seryl-[protein] + diphosphate. It carries out the reaction L-threonyl-[protein] + ATP = 3-O-(5'-adenylyl)-L-threonyl-[protein] + diphosphate. The catalysed reaction is L-tyrosyl-[protein] + ATP = O-(5'-adenylyl)-L-tyrosyl-[protein] + diphosphate. It catalyses the reaction L-histidyl-[protein] + UTP = N(tele)-(5'-uridylyl)-L-histidyl-[protein] + diphosphate. The enzyme catalyses L-seryl-[protein] + UTP = O-(5'-uridylyl)-L-seryl-[protein] + diphosphate. It carries out the reaction L-tyrosyl-[protein] + UTP = O-(5'-uridylyl)-L-tyrosyl-[protein] + diphosphate. Its function is as follows. Nucleotidyltransferase involved in the post-translational modification of proteins. It can catalyze the addition of adenosine monophosphate (AMP) or uridine monophosphate (UMP) to a protein, resulting in modifications known as AMPylation and UMPylation. This chain is Protein nucleotidyltransferase YdiU, found in Pseudomonas savastanoi pv. phaseolicola (strain 1448A / Race 6) (Pseudomonas syringae pv. phaseolicola (strain 1448A / Race 6)).